The primary structure comprises 122 residues: Large ribosomal subunit protein uL14 (122 aa).

The protein belongs to the universal ribosomal protein uL14 family. Part of the 50S ribosomal subunit. Forms a cluster with proteins L3 and L19. In the 70S ribosome, L14 and L19 interact and together make contacts with the 16S rRNA in bridges B5 and B8.

In terms of biological role, binds to 23S rRNA. Forms part of two intersubunit bridges in the 70S ribosome. The chain is Large ribosomal subunit protein uL14 from Nostoc punctiforme (strain ATCC 29133 / PCC 73102).